Consider the following 160-residue polypeptide: Cathelin-related peptide SC5 (160 aa).

The first 29 residues, 1 to 29 (METQRASLSLGRRSLWLLLLGLVLASASA), serve as a signal peptide directing secretion. Positions 30–131 (QALSYREAVL…DITCAEPQSV (102 aa)) are excised as a propeptide. Cystine bridges form between Cys-86-Cys-97 and Cys-108-Cys-125.

It belongs to the cathelicidin family.

It localises to the secreted. In terms of biological role, broad spectrum bactericidal agent. This is Cathelin-related peptide SC5 from Ovis aries (Sheep).